Reading from the N-terminus, the 160-residue chain is H/ACA ribonucleoprotein complex subunit 2 (160 aa).

Ser-15 carries the phosphoserine modification. Phosphothreonine is present on Thr-23.

It belongs to the eukaryotic ribosomal protein eL8 family. As to quaternary structure, component of the box H/ACA small nucleolar ribonucleoprotein (H/ACA snoRNP) complex consisting of Nop60B, Gar1, NPH2 and Nop10, and associated with H/ACA-type snoRNAs.

The protein localises to the nucleus. It localises to the nucleolus. Functionally, component of the box H/ACA small nucleolar ribonucleoprotein (H/ACA snoRNP) complex, which catalyzes pseudouridylation of rRNA. This involves the isomerization of uridine such that the ribose is subsequently attached to C5, instead of the normal N1. Pseudouridine ('psi') residues may serve to stabilize the conformation of rRNAs. Required for ribosome biogenesis. H/ACA snoRNP complex-dependent ribosome biogenesis is important in female germline cell differentiation during oogenesis. This chain is H/ACA ribonucleoprotein complex subunit 2, found in Drosophila melanogaster (Fruit fly).